The sequence spans 210 residues: Outer-membrane lipoprotein carrier protein (210 aa).

An N-terminal signal peptide occupies residues 1 to 26 (MHMIRRAAGALAVFAVAALAAAPAWA).

The protein belongs to the LolA family. As to quaternary structure, monomer.

It localises to the periplasm. In terms of biological role, participates in the translocation of lipoproteins from the inner membrane to the outer membrane. Only forms a complex with a lipoprotein if the residue after the N-terminal Cys is not an aspartate (The Asp acts as a targeting signal to indicate that the lipoprotein should stay in the inner membrane). In Bordetella bronchiseptica (strain ATCC BAA-588 / NCTC 13252 / RB50) (Alcaligenes bronchisepticus), this protein is Outer-membrane lipoprotein carrier protein.